A 170-amino-acid polypeptide reads, in one-letter code: RNA pyrophosphohydrolase (170 aa).

Residues 6–149 (GFRPNVGIVI…KRDVYRRALK (144 aa)) enclose the Nudix hydrolase domain. Positions 38 to 59 (GGIDDGETPEQAMYRELYEEVG) match the Nudix box motif.

This sequence belongs to the Nudix hydrolase family. RppH subfamily. A divalent metal cation serves as cofactor.

In terms of biological role, accelerates the degradation of transcripts by removing pyrophosphate from the 5'-end of triphosphorylated RNA, leading to a more labile monophosphorylated state that can stimulate subsequent ribonuclease cleavage. This is RNA pyrophosphohydrolase from Aliivibrio fischeri (strain ATCC 700601 / ES114) (Vibrio fischeri).